The primary structure comprises 371 residues: tRNA-specific 2-thiouridylase MnmA (371 aa).

ATP-binding positions include 13 to 20 (GMSGGVDS) and M39. Residues 99–101 (NPD) form an interaction with target base in tRNA region. The active-site Nucleophile is C104. Cysteines 104 and 200 form a disulfide. An ATP-binding site is contributed by G128. The interval 150 to 152 (KDQ) is interaction with tRNA. The active-site Cysteine persulfide intermediate is C200. The tract at residues 308–309 (RY) is interaction with tRNA.

It belongs to the MnmA/TRMU family.

The protein localises to the cytoplasm. It catalyses the reaction S-sulfanyl-L-cysteinyl-[protein] + uridine(34) in tRNA + AH2 + ATP = 2-thiouridine(34) in tRNA + L-cysteinyl-[protein] + A + AMP + diphosphate + H(+). Catalyzes the 2-thiolation of uridine at the wobble position (U34) of tRNA, leading to the formation of s(2)U34. This chain is tRNA-specific 2-thiouridylase MnmA, found in Listeria welshimeri serovar 6b (strain ATCC 35897 / DSM 20650 / CCUG 15529 / CIP 8149 / NCTC 11857 / SLCC 5334 / V8).